Consider the following 329-residue polypeptide: Glyceraldehyde-3-phosphate dehydrogenase 1 (329 aa).

Residues 11–12, D33, and E77 each bind NAD(+); that span reads RI. Position 148 is a phosphoserine (S148). 148–150 serves as a coordination point for D-glyceraldehyde 3-phosphate; the sequence is SCT. The active-site Nucleophile is C149. S177 is modified (phosphoserine). T179 contributes to the D-glyceraldehyde 3-phosphate binding site. S200 carries the post-translational modification Phosphoserine. D-glyceraldehyde 3-phosphate contacts are provided by residues 208 to 209 and R231; that span reads TG. Residue N313 coordinates NAD(+).

It belongs to the glyceraldehyde-3-phosphate dehydrogenase family. As to quaternary structure, homotetramer.

The protein resides in the cytoplasm. It catalyses the reaction D-glyceraldehyde 3-phosphate + phosphate + NAD(+) = (2R)-3-phospho-glyceroyl phosphate + NADH + H(+). Its pathway is carbohydrate degradation; glycolysis; pyruvate from D-glyceraldehyde 3-phosphate: step 1/5. This chain is Glyceraldehyde-3-phosphate dehydrogenase 1, found in Kluyveromyces marxianus (Yeast).